A 400-amino-acid polypeptide reads, in one-letter code: uncharacterized protein (400 aa).

It to M.jannaschii MJ1544 and MJ1637.

This is an uncharacterized protein from Haemophilus influenzae (strain ATCC 51907 / DSM 11121 / KW20 / Rd).